A 276-amino-acid chain; its full sequence is Large ribosomal subunit protein uL2c (276 aa).

The disordered stretch occupies residues 225–256; it reads NPVDHPHGGGEGRSPIGRPKPVSPWGKTALGA.

The protein belongs to the universal ribosomal protein uL2 family. In terms of assembly, part of the 50S ribosomal subunit.

Its subcellular location is the plastid. It is found in the chloroplast. In Mesostigma viride (Green alga), this protein is Large ribosomal subunit protein uL2c (rpl2).